The primary structure comprises 69 residues: Pleurain-A2 (69 aa).

The N-terminal stretch at 1–22 (MFTLKKTLLLLYFLGTISISLC) is a signal peptide. Residues 23-43 (KQERDADEDDGRKMTEEEVKR) constitute a propeptide that is removed on maturation. A disulfide bridge links Cys-63 with Cys-69.

Expressed by the skin glands.

It is found in the secreted. Functionally, antimicrobial peptide. Has activity against the Gram-positive bacterium S.aureus ATCC2592 (MIC=15 ug/ml), the Gram-negative bacteria E.coli ATCC25922 (MIC=60 ug/ml), B.dysenteriae (MIC=60 ug/ml), H.pylori NTCT11637 (MIC=30 ug/ml), and the fungus C.albicans ATCC2002 (MIC=30 ug/ml). Has little hemolytic activity on rabbit red blood cells. The protein is Pleurain-A2 of Nidirana pleuraden (Yunnan pond frog).